A 216-amino-acid chain; its full sequence is Transmembrane protein 139 (216 aa).

An N-terminal signal peptide occupies residues 1-25 (MVPMHLLGRLEKPLLLLCCASFLLG). The Extracellular portion of the chain corresponds to 26–34 (LALLGIKTD). A helical transmembrane segment spans residues 35–55 (ITPVAYFFLTLGGFFLFAYLL). The Cytoplasmic portion of the chain corresponds to 56–216 (VRFLEWGLRS…VFYEDNWAPP (161 aa)). A disordered region spans residues 104 to 163 (RPQELDQPPPYSTVVIPPAPEEEQPSHPEGSRRAKLEQRRMASEGSMAQEGSPGRAPINL). A compositionally biased stretch (basic and acidic residues) spans 127-145 (QPSHPEGSRRAKLEQRRMA). S146 and S155 each carry phosphoserine.

As to quaternary structure, interacts with isoform 2 of SLC4A1.

It localises to the membrane. Functionally, may be involved in cellular trafficking of proteins such as SLC4A1. The polypeptide is Transmembrane protein 139 (TMEM139) (Homo sapiens (Human)).